A 786-amino-acid chain; its full sequence is Endonuclease MutS2 (786 aa).

Gly-332–Thr-339 contacts ATP. The Smr domain maps to Ile-711 to Lys-786.

The protein belongs to the DNA mismatch repair MutS family. MutS2 subfamily. Homodimer. Binds to stalled ribosomes, contacting rRNA.

In terms of biological role, endonuclease that is involved in the suppression of homologous recombination and thus may have a key role in the control of bacterial genetic diversity. Its function is as follows. Acts as a ribosome collision sensor, splitting the ribosome into its 2 subunits. Detects stalled/collided 70S ribosomes which it binds and splits by an ATP-hydrolysis driven conformational change. Acts upstream of the ribosome quality control system (RQC), a ribosome-associated complex that mediates the extraction of incompletely synthesized nascent chains from stalled ribosomes and their subsequent degradation. Probably generates substrates for RQC. This chain is Endonuclease MutS2, found in Clostridium perfringens (strain 13 / Type A).